A 100-amino-acid polypeptide reads, in one-letter code: uncharacterized protein (100 aa).

This is an uncharacterized protein from Borreliella burgdorferi (strain ATCC 35210 / DSM 4680 / CIP 102532 / B31) (Borrelia burgdorferi).